The following is a 120-amino-acid chain: UPF0231 protein NT01EI_0766 (120 aa).

The protein belongs to the UPF0231 family.

The chain is UPF0231 protein NT01EI_0766 from Edwardsiella ictaluri (strain 93-146).